Here is a 500-residue protein sequence, read N- to C-terminus: Chromosomal replication initiator protein DnaA (500 aa).

A disordered region spans residues 1–37 (MSDTPFGDADHPRPAPIHPDAVLPPPMSSQSADNDPT). The domain I, interacts with DnaA modulators stretch occupies residues 1–103 (MSDTPFGDAD…EELLSDHFHK (103 aa)). Positions 14 to 27 (PAPIHPDAVLPPPM) are enriched in pro residues. The interval 103–161 (KAIHLAITIDPDLELALGAPDHEDEEEEVPPAQFVPKVTVGVTEPSARPTTTIDDDEGN) is domain II. Residues 162-378 (RLNPKYTFDS…GALIRVTAFA (217 aa)) are domain III, AAA+ region. The ATP site is built by glycine 206, glycine 208, lysine 209, and threonine 210. Residues 379 to 500 (SLNQQPVDIS…SEITNRIKQY (122 aa)) form a domain IV, binds dsDNA region.

It belongs to the DnaA family. Oligomerizes as a right-handed, spiral filament on DNA at oriC.

The protein localises to the cytoplasm. In terms of biological role, plays an essential role in the initiation and regulation of chromosomal replication. ATP-DnaA binds to the origin of replication (oriC) to initiate formation of the DNA replication initiation complex once per cell cycle. Binds the DnaA box (a 9 base pair repeat at the origin) and separates the double-stranded (ds)DNA. Forms a right-handed helical filament on oriC DNA; dsDNA binds to the exterior of the filament while single-stranded (ss)DNA is stabiized in the filament's interior. The ATP-DnaA-oriC complex binds and stabilizes one strand of the AT-rich DNA unwinding element (DUE), permitting loading of DNA polymerase. After initiation quickly degrades to an ADP-DnaA complex that is not apt for DNA replication. Binds acidic phospholipids. The polypeptide is Chromosomal replication initiator protein DnaA (Cutibacterium acnes (strain DSM 16379 / KPA171202) (Propionibacterium acnes)).